The primary structure comprises 275 residues: Putative phosphoenolpyruvate synthase regulatory protein (275 aa).

Position 157–164 (Gly157–Thr164) interacts with ADP.

Belongs to the pyruvate, phosphate/water dikinase regulatory protein family. PSRP subfamily.

The enzyme catalyses [pyruvate, water dikinase] + ADP = [pyruvate, water dikinase]-phosphate + AMP + H(+). The catalysed reaction is [pyruvate, water dikinase]-phosphate + phosphate + H(+) = [pyruvate, water dikinase] + diphosphate. Bifunctional serine/threonine kinase and phosphorylase involved in the regulation of the phosphoenolpyruvate synthase (PEPS) by catalyzing its phosphorylation/dephosphorylation. The polypeptide is Putative phosphoenolpyruvate synthase regulatory protein (Bordetella bronchiseptica (strain ATCC BAA-588 / NCTC 13252 / RB50) (Alcaligenes bronchisepticus)).